An 827-amino-acid polypeptide reads, in one-letter code: Villin-1 (827 aa).

The interval 1–126 is necessary for homodimerization; sequence MTKLSAQVKG…IRKGGVASGM (126 aa). Residues 1 to 734 are core; it reads MTKLSAQVKG…YEDLKAELGN (734 aa). The stretch at 27 to 76 is one Gelsolin-like 1 repeat; the sequence is MQMVPVPSNSFGSFFDGDCYVIQAIHKTGSNLSYDIHYWIGQASSQDEQG. 2 LPA/PIP2-binding site regions span residues 112–119 and 138–146; these read KKGIVIRK and RLLHVKGKR. Gelsolin-like repeat units follow at residues 148–188 and 265–309; these read VVAG…MERL and VVVR…QEKK. Ser-366 carries the post-translational modification Phosphoserine. Gelsolin-like repeat units follow at residues 407–457, 528–568, and 631–672; these read NLEL…DEIT, TKAF…DERE, and FLAT…DEKK. Ser-735 is subject to Phosphoserine. A headpiece region spans residues 735–827; the sequence is SGDWSQITAE…QNLKKEKGLF (93 aa). The region spanning 761 to 827 is the HP domain; it reads SGPLPIFPLE…QNLKKEKGLF (67 aa). The segment at 816 to 824 is LPA/PIP2-binding site 3; it reads KQQNLKKEK.

Belongs to the villin/gelsolin family. Monomer. Homodimer; homodimerization is necessary for actin-bundling. Associates with F-actin; phosphorylation at tyrosine residues decreases the association with F-actin. Interacts (phosphorylated at C-terminus tyrosine phosphorylation sites) with PLCG1 (via the SH2 domains). Interacts (phosphorylated form) with PLCG1; the interaction is enhanced by hepatocyte growth factor (HGF). Post-translationally, phosphorylated on tyrosine residues by SRC. The unphosphorylated form increases the initial rate of actin-nucleating activity, whereas the tyrosine-phosphorylated form inhibits actin-nucleating activity, enhances actin-bundling activity and enhances actin-severing activity by reducing high Ca(2+) requirements. The tyrosine-phosphorylated form does not regulate actin-capping activity. Tyrosine phosphorylation is essential for cell migration: tyrosine phosphorylation sites in the N-terminus half regulate actin reorganization and cell morphology, whereas tyrosine phosphorylation sites in the C-terminus half regulate cell migration via interaction with PLCG1. Tyrosine phosphorylation is induced by epidermal growth factor (EGF) and stimulates cell migration.

It is found in the cytoplasm. Its subcellular location is the cytoskeleton. The protein localises to the cell projection. It localises to the lamellipodium. The protein resides in the ruffle. It is found in the microvillus. Its subcellular location is the filopodium tip. The protein localises to the filopodium. Its function is as follows. Epithelial cell-specific Ca(2+)-regulated actin-modifying protein that modulates the reorganization of microvillar actin filaments. Plays a role in the actin nucleation, actin filament bundle assembly, actin filament capping and severing. Binds phosphatidylinositol 4,5-bisphosphate (PIP2) and lysophosphatidic acid (LPA); binds LPA with higher affinity than PIP2. Binding to LPA increases its phosphorylation by SRC and inhibits all actin-modifying activities. Binding to PIP2 inhibits actin-capping and -severing activities but enhances actin-bundling activity. Regulates the intestinal epithelial cell morphology, cell invasion, cell migration and apoptosis. Protects against apoptosis induced by dextran sodium sulfate (DSS) in the gastrointestinal epithelium. Appears to regulate cell death by maintaining mitochondrial integrity. Enhances hepatocyte growth factor (HGF)-induced epithelial cell motility, chemotaxis and wound repair. The sequence is that of Villin-1 (VIL1) from Bos taurus (Bovine).